Reading from the N-terminus, the 527-residue chain is Glucose-6-phosphate isomerase (527 aa).

The active-site Proton donor is the Glu-323. Residues His-352 and Lys-454 contribute to the active site.

It belongs to the GPI family.

The protein resides in the cytoplasm. The catalysed reaction is alpha-D-glucose 6-phosphate = beta-D-fructose 6-phosphate. It functions in the pathway carbohydrate biosynthesis; gluconeogenesis. The protein operates within carbohydrate degradation; glycolysis; D-glyceraldehyde 3-phosphate and glycerone phosphate from D-glucose: step 2/4. Catalyzes the reversible isomerization of glucose-6-phosphate to fructose-6-phosphate. This chain is Glucose-6-phosphate isomerase, found in Prochlorococcus marinus (strain MIT 9215).